The following is a 154-amino-acid chain: Ribonuclease HI (154 aa).

The 142-residue stretch at 1–142 (MTKHVEIFTD…CDELARTAAE (142 aa)) folds into the RNase H type-1 domain. Asp-10, Glu-48, Asp-70, and Asp-134 together coordinate Mg(2+).

This sequence belongs to the RNase H family. In terms of assembly, monomer. Mg(2+) is required as a cofactor.

It localises to the cytoplasm. It catalyses the reaction Endonucleolytic cleavage to 5'-phosphomonoester.. Functionally, endonuclease that specifically degrades the RNA of RNA-DNA hybrids. The polypeptide is Ribonuclease HI (Vibrio parahaemolyticus serotype O3:K6 (strain RIMD 2210633)).